The sequence spans 387 residues: Yellow-related salivary protein ASP2 (387 aa).

Residues 1–18 form the signal peptide; it reads MKIFLCLIVVVSLQGVLA.

This sequence belongs to the major royal jelly protein family. Female salivary gland (at protein level).

Its subcellular location is the secreted. Its function is as follows. Probably modulates blood feeding of sand flies on vertebrate species by binding and sequestering different mediators involved in the host response. Binds biogenic amines. Binds octopamine with high affinity. Binds serotonin and dopamine with medium affinity. Poorly binds histamine. Does not bind noradrenaline and adrenaline. This chain is Yellow-related salivary protein ASP2, found in Phlebotomus orientalis (Phlebotomine sand fly).